The following is a 978-amino-acid chain: NACHT, LRR and PYD domains-containing protein 4E (978 aa).

A Pyrin domain is found at 1-93; sequence MASFFSDFGL…MERAGREIAG (93 aa). The NACHT domain occupies 148-471; that stretch reads HMVFLQGVAG…FHLLKSHVDH (324 aa). An ATP-binding site is contributed by 154–161; the sequence is GVAGIGKS. LRR repeat units lie at residues 594–617, 694–717, 746–773, 802–825, 859–882, and 916–940; these read CSTL…HSYT, LLNL…LNQA, SKML…LCHP, NKTL…VLCG, NQNL…LLCD, and CKTL…LFEA.

Belongs to the NLRP family.

Functionally, may be involved in inflammation and recognition of cytosolic pathogen-associated molecular patterns (PAMPs) not intercepted by membrane-bound receptors. The protein is NACHT, LRR and PYD domains-containing protein 4E (Nlrp4e) of Mus musculus (Mouse).